The primary structure comprises 678 residues: UvrABC system protein C (678 aa).

Residues 1 to 13 (MKKNISYGKHKTF) show a composition bias toward basic residues. The interval 1–25 (MKKNISYGKHKTFPSKLNGLEKQHS) is disordered. One can recognise a GIY-YIG domain in the interval 69–147 (HKPGVYRMFD…IKRLHPRFNV (79 aa)). The region spanning 257–292 (QSVKNDMIQAMHKAAEDLDFEQAAVYRDRLSALSHI) is the UVR domain.

The protein belongs to the UvrC family. In terms of assembly, interacts with UvrB in an incision complex.

It localises to the cytoplasm. In terms of biological role, the UvrABC repair system catalyzes the recognition and processing of DNA lesions. UvrC both incises the 5' and 3' sides of the lesion. The N-terminal half is responsible for the 3' incision and the C-terminal half is responsible for the 5' incision. The polypeptide is UvrABC system protein C (Bartonella quintana (strain Toulouse) (Rochalimaea quintana)).